A 503-amino-acid chain; its full sequence is ATP synthase subunit alpha (503 aa).

G170–T177 is a binding site for ATP.

Belongs to the ATPase alpha/beta chains family. F-type ATPases have 2 components, CF(1) - the catalytic core - and CF(0) - the membrane proton channel. CF(1) has five subunits: alpha(3), beta(3), gamma(1), delta(1), epsilon(1). CF(0) has three main subunits: a(1), b(2) and c(9-12). The alpha and beta chains form an alternating ring which encloses part of the gamma chain. CF(1) is attached to CF(0) by a central stalk formed by the gamma and epsilon chains, while a peripheral stalk is formed by the delta and b chains.

The protein resides in the cell inner membrane. It carries out the reaction ATP + H2O + 4 H(+)(in) = ADP + phosphate + 5 H(+)(out). Functionally, produces ATP from ADP in the presence of a proton gradient across the membrane. The alpha chain is a regulatory subunit. This Helicobacter acinonychis (strain Sheeba) protein is ATP synthase subunit alpha.